Reading from the N-terminus, the 1904-residue chain is Callose synthase 10 (1904 aa).

Residues Val100–Arg132 form an HAT 1 repeat. 6 helical membrane passes run Ser491–Phe511, Ala532–Met552, Val562–Val582, Phe594–Gly614, Tyr661–Ile681, and Val722–Gly742. The LRR 1 repeat unit spans residues Phe678–Trp701. 2 LRR repeats span residues Leu751 to Asn774 and Thr925 to Asn948. The HAT 2 repeat unit spans residues Tyr1074–Arg1107. The LRR 4 repeat unit spans residues Phe1159 to Ser1181. 9 consecutive transmembrane segments (helical) span residues Phe1474–Leu1494, Phe1529–Leu1549, Ala1554–Leu1574, Ala1621–Ala1641, Phe1644–Ile1664, Leu1747–Phe1767, Phe1783–Thr1803, Phe1811–Trp1831, and Ala1853–Ser1873. The HAT 3 repeat unit spans residues Leu1659 to Gly1691.

The protein belongs to the glycosyltransferase 48 family.

Its subcellular location is the cell membrane. It catalyses the reaction [(1-&gt;3)-beta-D-glucosyl](n) + UDP-alpha-D-glucose = [(1-&gt;3)-beta-D-glucosyl](n+1) + UDP + H(+). Its function is as follows. Involved in sporophytic and gametophytic development. Required for normal plant development and for the proper accumulation of callose at cell plates, cll walls and plasmodesmata. During pollen formation, required for the entry of microspores into mitosis. During plant growth and development, callose is found as a transitory component of the cell plate in dividing cells, is a major component of pollen mother cell walls and pollen tubes, and is found as a structural component of plasmodesmatal canals. Required for proper cell division and tissue patterning throughout plant organs, including stomatal patterning. In Arabidopsis thaliana (Mouse-ear cress), this protein is Callose synthase 10 (CALS10).